The sequence spans 260 residues: UPF0246 protein Cbei_1739 (260 aa).

Belongs to the UPF0246 family.

This chain is UPF0246 protein Cbei_1739, found in Clostridium beijerinckii (strain ATCC 51743 / NCIMB 8052) (Clostridium acetobutylicum).